The following is a 255-amino-acid chain: Zinc D-Ala-D-Ala carboxypeptidase (255 aa).

Residues 1 to 42 (MRPRPIRLLLTALVGAGLAFAPVSAVAAPTATASASADVGAL) form the signal peptide. D43 bears the Blocked amino end (Asp) mark. 2 disulfide bridges follow: C45/C123 and C136/C184. Residue R180 coordinates substrate. H196 contributes to the Zn(2+) binding site. C212 and C253 form a disulfide bridge. Catalysis depends on H234, which acts as the Proton donor. Positions 237 and 239 each coordinate Zn(2+).

This sequence belongs to the peptidase M15 family. Requires Zn(2+) as cofactor. The N-terminus is partially blocked as a result of the cyclization of the first two amino acids into anhydroaspartylglycine imide.

It is found in the secreted. The catalysed reaction is Cleavage of the bond: (Ac)2-L-lysyl-D-alanyl-|-D-alanine.. Its function is as follows. This enzyme catalyzes carboxypeptidation and transpeptidation reactions involved in bacterial cell wall metabolism. It effectively catalyzes the transfer of the N-alpha, N-epsilon-diacetyl-L-lysyl-D-alanyl electrophilic group of the standard tripeptide substrate N-alpha,N-epsilon-diacetyl-L-lysyl-D-alanyl-D-alanine to water. It also performs a weak beta-lactamase activity, hydrolyzing penicillin into penicilloate at a very low rate. The chain is Zinc D-Ala-D-Ala carboxypeptidase from Streptomyces albus G.